We begin with the raw amino-acid sequence, 387 residues long: Protoheme IX farnesyltransferase, mitochondrial (387 aa).

8 helical membrane passes run 95–115, 117–137, 183–203, 212–232, 242–262, 284–306, 311–330, and 345–365; these read LTVL…YPGL, FNTL…ANAF, FLVN…YMGI, IVNT…GWAA, PGGL…FNAF, ALNA…AYIS, GPWY…ARAW, and FFAS…CHMI.

This sequence belongs to the UbiA prenyltransferase family.

The protein localises to the mitochondrion membrane. The catalysed reaction is heme b + (2E,6E)-farnesyl diphosphate + H2O = Fe(II)-heme o + diphosphate. Converts protoheme IX and farnesyl diphosphate to heme O. The polypeptide is Protoheme IX farnesyltransferase, mitochondrial (cox10) (Schizosaccharomyces pombe (strain 972 / ATCC 24843) (Fission yeast)).